The primary structure comprises 352 residues: Ion-translocating oxidoreductase complex subunit D (352 aa).

The next 4 membrane-spanning stretches (helical) occupy residues Ile-20–Gly-40, Gly-42–Leu-62, Ile-89–Ala-109, and Pro-123–Leu-143. Residue Thr-187 is modified to FMN phosphoryl threonine. The next 5 helical transmembrane spans lie at Ile-214–Leu-234, Trp-242–Phe-262, Leu-267–Leu-287, Leu-301–Pro-321, and Asp-322–Thr-342.

Belongs to the NqrB/RnfD family. In terms of assembly, the complex is composed of six subunits: RsxA, RsxB, RsxC, RsxD, RsxE and RsxG. The cofactor is FMN.

Its subcellular location is the cell inner membrane. Its function is as follows. Part of a membrane-bound complex that couples electron transfer with translocation of ions across the membrane. Required to maintain the reduced state of SoxR. The sequence is that of Ion-translocating oxidoreductase complex subunit D from Escherichia coli O17:K52:H18 (strain UMN026 / ExPEC).